Here is an 855-residue protein sequence, read N- to C-terminus: Dynein axonemal assembly factor 5 (855 aa).

The residue at position 2 (Ala2) is an N-acetylalanine. HEAT repeat units follow at residues 71–109, 202–240, 241–278, 280–318, 354–376, 377–414, 599–638, 696–734, 738–776, and 784–822; these read GPWA…RAAR, HMQS…FGNG, KSVD…CLRD, YSFF…QWQK, FRNL…VGTR, VKSA…DEEA, GEAL…RATD, RDVQ…TSGG, PEKL…CVKG, and QSSV…LFPD.

This sequence belongs to the DNAAF5 family. Interacts with DNAI2; probably involved in outer arm dynein assembly. Expressed in nasal epithelium and lung epithelium by ciliated cells (at protein level).

It is found in the cytoplasm. Its subcellular location is the dynein axonemal particle. In terms of biological role, cytoplasmic protein involved in the delivery of the dynein machinery to the motile cilium. It is required for the assembly of the axonemal dynein inner and outer arms, two structures attached to the peripheral outer doublet A microtubule of the axoneme, that play a crucial role in cilium motility. The protein is Dynein axonemal assembly factor 5 of Homo sapiens (Human).